The primary structure comprises 713 residues: MSVLIDEKSHRSSGSTRSRIVVTVVGVLLMVSGLAVMLGHQSGSANEALGMEYEKPSVEVLDLEATEVEQLTKLGLSPKPKLKIVKGGDEQVLHGRFLHITDMHPDKYYKTGADVGSLCHSGKGSAGKYGDAVLGCDSPMVLMEDTLKWVKENLKDKIDFVVWTGDNVRHDNDRRYPRTESNIFDMNQRVSELMYETFKEENPRGGRPRQLKIPLVPSLGNNDVFPHNLFSPGPTLQTRELFKIWHDFVPAAQLHIFNRGAYFFKEIIPNELAVLSINTLYLFQSNPLVDNCDRKKDPGHKLFEWLGYTLKEMRARNMKVWLSGHVPPNEKNYDISCLRKYIVWMHEYRDVIIGGLYGHMNIDHFIPLDSKEAYKSIKNKFGKLGFDYELSFENDLYVSDDDDNSDSDSDDDDEDTSLEESYSNFNSPILKDGFEDSVNFKNMDDIRIQGGVPNGKVGYMENVRKEYYANVKGKKKSGYVSERYSIAHVTASVVPTFNSGLRVWEYNITGLQNLLTSDNQPRFAPWNEFFEGLEKLMETQVEADYDDEFITFGQQVEIFKNDNTFPPKMPKSKSLGPAYIPQAFTPERYVQYYADLANINRGEKEFSYEFEYATDDKVYDMDSLTVDDWISLARRLGKPVKEKKNKSNKKSKKKKKNKDKRLLENSEPLKQDGSKDSRLEQDRVQQSARLENLWQHYLKYSFVSSEYENMGMG.

The Cytoplasmic segment spans residues 1–19; the sequence is MSVLIDEKSHRSSGSTRSR. The chain crosses the membrane as a helical; Signal-anchor for type II membrane protein span at residues 20 to 40; the sequence is IVVTVVGVLLMVSGLAVMLGH. Over 41–713 the chain is Vacuolar; the sequence is QSGSANEALG…SSEYENMGMG (673 aa). A compositionally biased stretch (acidic residues) spans 399-418; it reads SDDDDNSDSDSDDDDEDTSL. A disordered region spans residues 399–430; it reads SDDDDNSDSDSDDDDEDTSLEESYSNFNSPIL. 2 N-linked (GlcNAc...) asparagine glycosylation sites follow: asparagine 507 and asparagine 645. Positions 640 to 659 are enriched in basic residues; sequence VKEKKNKSNKKSKKKKKNKD. The disordered stretch occupies residues 640–684; the sequence is VKEKKNKSNKKSKKKKKNKDKRLLENSEPLKQDGSKDSRLEQDRV. Residues 660 to 683 are compositionally biased toward basic and acidic residues; it reads KRLLENSEPLKQDGSKDSRLEQDR.

It belongs to the endopolyphosphatase PPN1 family. Requires a divalent metal cation as cofactor. Post-translationally, processing by proteases in the vacuole may be required for activation.

It is found in the vacuole membrane. It carries out the reaction [phosphate](n+1) + n H2O = (n+1) phosphate + n H(+). Its function is as follows. Catalyzes the hydrolysis of inorganic polyphosphate (polyP) chains of many hundreds of phosphate residues into shorter lengths. In Debaryomyces hansenii (strain ATCC 36239 / CBS 767 / BCRC 21394 / JCM 1990 / NBRC 0083 / IGC 2968) (Yeast), this protein is Endopolyphosphatase (PPN1).